Reading from the N-terminus, the 207-residue chain is Large ribosomal subunit protein uL4 (207 aa).

The interval 44–77 is disordered; sequence LRQGTHKTKGRSEVRGGGRKPWRQKGTGRARQGS. Positions 60–71 are enriched in basic residues; it reads GGRKPWRQKGTG.

The protein belongs to the universal ribosomal protein uL4 family. As to quaternary structure, part of the 50S ribosomal subunit.

One of the primary rRNA binding proteins, this protein initially binds near the 5'-end of the 23S rRNA. It is important during the early stages of 50S assembly. It makes multiple contacts with different domains of the 23S rRNA in the assembled 50S subunit and ribosome. Functionally, forms part of the polypeptide exit tunnel. The protein is Large ribosomal subunit protein uL4 of Shouchella clausii (strain KSM-K16) (Alkalihalobacillus clausii).